A 169-amino-acid polypeptide reads, in one-letter code: Chorion protein E1 (169 aa).

Positions Met1–Ala19 are cleaved as a signal peptide. Tetradecapeptide repeat units follow at residues Gly114 to Ser127 and Gly128 to Ser141. Residues Ala119–Ser169 form a disordered region. Polar residues predominate over residues Thr142 to Ala152.

Functionally, this protein is one of two components of the prominent 'filler' that helps mold the shape of aeropyle crowns. This is Chorion protein E1 from Antheraea polyphemus (Polyphemus moth).